A 314-amino-acid chain; its full sequence is Trimethylamine N-oxide-binding protein (314 aa).

The N-terminal stretch at Met1–Ala24 is a signal peptide. Trimethylamine N-oxide-binding residues include Trp38, Trp85, Glu114, Trp164, and Trp212.

The complex is probably composed of two ATP-binding proteins (TmoW), two transmembrane proteins (TmoV) and a solute-binding protein (TmoX).

It localises to the periplasm. Part of the ABC transporter complex TmoXWV involved in trimethylamine N-oxide (TMAO) import. Possesses a high binding affinity toward TMAO, but presents little binding affinity toward betaine, carnitine, trimethylamine (TMA) or dimethylamine (DMA). This is Trimethylamine N-oxide-binding protein from Pelagibacter ubique (strain HTCC1062).